A 364-amino-acid polypeptide reads, in one-letter code: WAT1-related protein At5g47470 (364 aa).

10 helical membrane-spanning segments follow: residues 28–48, 59–79, 93–113, 124–144, 158–178, 197–217, 228–248, 255–275, 293–313, and 319–339; these read MVIV…SLLM, FTIV…FAIL, LIGK…SLFL, ATAM…IVGL, ILGT…HSTS, VVGC…VVLQ, ISLS…VLLL, VLAS…LAGA, PVFV…FAVL, and VSLG…LVLW. The region spanning 40-172 is the EamA 1 domain; the sequence is VYAGNSLLMS…LCVFGALAMS (133 aa). Residues 219-338 enclose the EamA 2 domain; sequence STLAEFPAPI…LMFVGLYLVL (120 aa).

This sequence belongs to the drug/metabolite transporter (DMT) superfamily. Plant drug/metabolite exporter (P-DME) (TC 2.A.7.4) family.

It localises to the membrane. The polypeptide is WAT1-related protein At5g47470 (Arabidopsis thaliana (Mouse-ear cress)).